Reading from the N-terminus, the 150-residue chain is UPF0756 membrane protein CGSHiEE_06715 (150 aa).

Transmembrane regions (helical) follow at residues 1–21 (MTLQ…LGVL), 52–72 (YGVK…LVSG), 81–101 (GFVS…AWLA), and 123–143 (IIGV…AGIL).

Belongs to the UPF0756 family.

It is found in the cell membrane. This chain is UPF0756 membrane protein CGSHiEE_06715, found in Haemophilus influenzae (strain PittEE).